The following is a 434-amino-acid chain: UDP-N-acetylglucosamine 1-carboxyvinyltransferase (434 aa).

22–23 (KN) provides a ligand contact to phosphoenolpyruvate. Position 97 (R97) interacts with UDP-N-acetyl-alpha-D-glucosamine. D121 functions as the Proton donor in the catalytic mechanism. Positions 319 and 341 each coordinate UDP-N-acetyl-alpha-D-glucosamine.

The protein belongs to the EPSP synthase family. MurA subfamily.

It is found in the cytoplasm. The catalysed reaction is phosphoenolpyruvate + UDP-N-acetyl-alpha-D-glucosamine = UDP-N-acetyl-3-O-(1-carboxyvinyl)-alpha-D-glucosamine + phosphate. It participates in cell wall biogenesis; peptidoglycan biosynthesis. Functionally, cell wall formation. Adds enolpyruvyl to UDP-N-acetylglucosamine. This chain is UDP-N-acetylglucosamine 1-carboxyvinyltransferase, found in Bacteroides thetaiotaomicron (strain ATCC 29148 / DSM 2079 / JCM 5827 / CCUG 10774 / NCTC 10582 / VPI-5482 / E50).